We begin with the raw amino-acid sequence, 74 residues long: Heat shock factor-binding protein 1-like protein 1 (74 aa).

Residues 12 to 65 adopt a coiled-coil conformation; it reads RALRDAAENLFQELQEHFQALTATLNLRMEEMGNRIEDLQKNVKDLMVQAGIEN.

This sequence belongs to the HSBP1 family.

This Homo sapiens (Human) protein is Heat shock factor-binding protein 1-like protein 1 (HSBP1L1).